Consider the following 178-residue polypeptide: Transmembrane protein 196 (178 aa).

The next 4 helical transmembrane spans lie at 11-31, 47-67, 73-93, and 106-126; these read LLVL…VGAV, SSPV…ILCA, LVMI…ILNF, and LYPL…GCTL.

As to expression, expression is significantly decreased in lung cancer cells compared to normal lung tissue (at protein level).

Its subcellular location is the cytoplasm. It is found in the membrane. Acts as a tumor suppressor in lung cancer. Inhibits tumor cell growth by inhibiting cell proliferation and migration and promoting cell apoptosis. Inhibits metastasis of lung cancer by suppressing beta-catenin expression in the Wnt/beta-catenin signaling pathway. In Homo sapiens (Human), this protein is Transmembrane protein 196 (TMEM196).